Reading from the N-terminus, the 352-residue chain is tRNA-specific 2-thiouridylase MnmA (352 aa).

ATP contacts are provided by residues 6–13 and leucine 32; that span reads AMSGGVDS. The Nucleophile role is filled by cysteine 101. An intrachain disulfide couples cysteine 101 to cysteine 194. Glycine 125 is an ATP binding site. An interaction with tRNA region spans residues 144–146; sequence KDQ. Residue cysteine 194 is the Cysteine persulfide intermediate of the active site.

Belongs to the MnmA/TRMU family.

The protein localises to the cytoplasm. It catalyses the reaction S-sulfanyl-L-cysteinyl-[protein] + uridine(34) in tRNA + AH2 + ATP = 2-thiouridine(34) in tRNA + L-cysteinyl-[protein] + A + AMP + diphosphate + H(+). Its function is as follows. Catalyzes the 2-thiolation of uridine at the wobble position (U34) of tRNA, leading to the formation of s(2)U34. In Frankia alni (strain DSM 45986 / CECT 9034 / ACN14a), this protein is tRNA-specific 2-thiouridylase MnmA.